The following is a 548-amino-acid chain: Chaperonin GroEL (548 aa).

ATP is bound by residues 30 to 33 (TLGP), K51, 87 to 91 (DGTTT), G415, 479 to 481 (NAA), and D495.

It belongs to the chaperonin (HSP60) family. Forms a cylinder of 14 subunits composed of two heptameric rings stacked back-to-back. Interacts with the co-chaperonin GroES.

The protein localises to the cytoplasm. It catalyses the reaction ATP + H2O + a folded polypeptide = ADP + phosphate + an unfolded polypeptide.. Its function is as follows. Together with its co-chaperonin GroES, plays an essential role in assisting protein folding. The GroEL-GroES system forms a nano-cage that allows encapsulation of the non-native substrate proteins and provides a physical environment optimized to promote and accelerate protein folding. The protein is Chaperonin GroEL of Escherichia fergusonii (strain ATCC 35469 / DSM 13698 / CCUG 18766 / IAM 14443 / JCM 21226 / LMG 7866 / NBRC 102419 / NCTC 12128 / CDC 0568-73).